Consider the following 500-residue polypeptide: UDP-N-acetylmuramoyl-L-alanyl-D-glutamate--2,6-diaminopimelate ligase (500 aa).

A UDP-N-acetyl-alpha-D-muramoyl-L-alanyl-D-glutamate-binding site is contributed by serine 38. 118 to 124 (GTNGKTS) provides a ligand contact to ATP. Residues 160 to 161 (TT), serine 187, and arginine 195 each bind UDP-N-acetyl-alpha-D-muramoyl-L-alanyl-D-glutamate. Position 227 is an N6-carboxylysine (lysine 227). Meso-2,6-diaminopimelate contacts are provided by residues arginine 395, 419–422 (DNPR), glycine 471, and glutamate 475. The Meso-diaminopimelate recognition motif motif lies at 419–422 (DNPR).

Belongs to the MurCDEF family. MurE subfamily. The cofactor is Mg(2+). Post-translationally, carboxylation is probably crucial for Mg(2+) binding and, consequently, for the gamma-phosphate positioning of ATP.

The protein localises to the cytoplasm. The catalysed reaction is UDP-N-acetyl-alpha-D-muramoyl-L-alanyl-D-glutamate + meso-2,6-diaminopimelate + ATP = UDP-N-acetyl-alpha-D-muramoyl-L-alanyl-gamma-D-glutamyl-meso-2,6-diaminopimelate + ADP + phosphate + H(+). It functions in the pathway cell wall biogenesis; peptidoglycan biosynthesis. Functionally, catalyzes the addition of meso-diaminopimelic acid to the nucleotide precursor UDP-N-acetylmuramoyl-L-alanyl-D-glutamate (UMAG) in the biosynthesis of bacterial cell-wall peptidoglycan. This is UDP-N-acetylmuramoyl-L-alanyl-D-glutamate--2,6-diaminopimelate ligase from Leptospira borgpetersenii serovar Hardjo-bovis (strain L550).